The chain runs to 100 residues: RNA-binding protein YlxQ (100 aa).

Belongs to the eukaryotic ribosomal protein eL8 family.

In terms of biological role, RNA-binding protein that recognizes the K-turn motif present in ribosomal RNA, but also in box C/D and box C'/D' sRNAs. This chain is RNA-binding protein YlxQ, found in Bacillus subtilis (strain 168).